A 116-amino-acid chain; its full sequence is Large ribosomal subunit protein uL18 (116 aa).

The protein belongs to the universal ribosomal protein uL18 family. Part of the 50S ribosomal subunit; part of the 5S rRNA/L5/L18/L25 subcomplex. Contacts the 5S and 23S rRNAs.

Functionally, this is one of the proteins that bind and probably mediate the attachment of the 5S RNA into the large ribosomal subunit, where it forms part of the central protuberance. This Shewanella baltica (strain OS223) protein is Large ribosomal subunit protein uL18.